A 345-amino-acid chain; its full sequence is GTPase Obg (345 aa).

The region spanning 1–159 is the Obg domain; the sequence is MKFIDEAIIK…RTLRLELKLL (159 aa). Positions 127 to 148 are disordered; sequence NARFKSSTNRAPRKTTQGKPGE. The span at 130–144 shows a compositional bias: polar residues; sequence FKSSTNRAPRKTTQG. The OBG-type G domain occupies 160–334; that stretch reads ADVGLLGLPN…LIHAVMQYLE (175 aa). GTP is bound by residues 166 to 173, 191 to 195, 213 to 216, 284 to 287, and 315 to 317; these read GLPNAGKS, FTTLH, DIPG, NKTD, and SAL. The Mg(2+) site is built by serine 173 and threonine 193.

This sequence belongs to the TRAFAC class OBG-HflX-like GTPase superfamily. OBG GTPase family. Monomer. Mg(2+) is required as a cofactor.

It is found in the cytoplasm. Its function is as follows. An essential GTPase which binds GTP, GDP and possibly (p)ppGpp with moderate affinity, with high nucleotide exchange rates and a fairly low GTP hydrolysis rate. Plays a role in control of the cell cycle, stress response, ribosome biogenesis and in those bacteria that undergo differentiation, in morphogenesis control. The sequence is that of GTPase Obg from Nitrosococcus oceani (strain ATCC 19707 / BCRC 17464 / JCM 30415 / NCIMB 11848 / C-107).